The following is a 1044-amino-acid chain: Diacylglycerol lipase-alpha (1044 aa).

The Cytoplasmic portion of the chain corresponds to 1–22 (MPGIVVFRRRWSVGSDDLVLPA). Residues 23–43 (IFLFLLHTTWFVILSVVLFGL) traverse the membrane as a helical segment. Topologically, residues 44–60 (VYNPHEACSLNLVDHGR) are extracellular. The chain crosses the membrane as a helical span at residues 61–81 (GYLGILLSCMIAEMAIIWLSM). The Cytoplasmic segment spans residues 82 to 101 (RGGILYTEPRDSMQYVLYVR). Residues 102 to 122 (LAILVIEFIYAIVGIVWLTQY) form a helical membrane-spanning segment. Residues 123-136 (YTSCNDLTAKNVTL) lie on the Extracellular side of the membrane. An N-linked (GlcNAc...) asparagine glycan is attached at Asn-133. Residues 137–157 (GMVVCNWVVILSVCITVLCVF) traverse the membrane as a helical segment. The Cytoplasmic portion of the chain corresponds to 158–1044 (DPTGRTFVKL…KQDDLVISAR (887 aa)). Residues Ser-472 and Asp-524 each act as charge relay system in the active site. Residues Ser-728, Ser-730, Ser-733, Ser-744, Ser-784, Ser-786, Ser-808, Ser-810, Ser-835, Ser-849, and Ser-954 each carry the phosphoserine modification. Residues 848–897 (LSKHSQDTQPLEAALGSGGVTPERPPSATIEEEEAAGGSEGGGVAPRGEL) are disordered. The tract at residues 1013–1044 (QECLATDKIRTSTPTGHGASPTKQDDLVISAR) is disordered. Position 1025 is a phosphothreonine (Thr-1025).

It belongs to the AB hydrolase superfamily. Lipase family. In terms of assembly, interacts (via C-terminal) with CAMK2A; leading to the phosphorylation and inhibition of DAGLA enzymatic activity. Interacts (via PPXXF motif) with HOMER1 and HOMER2; this interaction is required for DAGLA membrane localization. The cofactor is Ca(2+). Post-translationally, phosphorylated at Ser-784 and Ser-810 by CAMK2A; phosphorylation by CAMK2A inhibits diacylglycerol lipase activity. In terms of tissue distribution, highly expressed by principal cells in the hippocampus. In embryonic brains, it is present in axonal tracts, while in adults it localizes to dendritic fields, correlating with the developmental change in requirement for 2-AG synthesis from the pre- to the postsynaptic compartment. Concentrated in heads of dendritic spines throughout the hippocampal formation. Highly compartmentalized into a wide perisynaptic annulus around the postsynaptic density of axospinous contacts but not intrasynaptically (at protein level).

It is found in the cell membrane. The protein resides in the cell projection. It localises to the dendritic spine membrane. The protein localises to the postsynaptic density membrane. Its subcellular location is the early endosome membrane. The enzyme catalyses a 1,2-diacyl-sn-glycerol + H2O = a 2-acylglycerol + a fatty acid + H(+). It catalyses the reaction 1-octadecanoyl-2-(5Z,8Z,11Z,14Z-eicosatetraenoyl)-sn-glycerol + H2O = 2-(5Z,8Z,11Z,14Z-eicosatetraenoyl)-glycerol + octadecanoate + H(+). It carries out the reaction 1,2-di-(9Z-octadecenoyl)-sn-glycerol + H2O = 2-(9Z-octadecenoyl)-glycerol + (9Z)-octadecenoate + H(+). The catalysed reaction is 1-(9Z-octadecenoyl)-2-(5Z,8Z,11Z,14Z-eicosatetraenoyl)-sn-glycerol + H2O = 2-(5Z,8Z,11Z,14Z-eicosatetraenoyl)-glycerol + (9Z)-octadecenoate + H(+). The enzyme catalyses 1-(9Z-octadecenoyl)-2-octadecanoyl-sn-glycerol + H2O = 2-octadecanoylglycerol + (9Z)-octadecenoate + H(+). It catalyses the reaction 1-(9Z-octadecenoyl)-2-(9Z,12Z-octadecadienoyl)-sn-glycerol + H2O = 2-(9Z,12Z-octadecadienoyl)-glycerol + (9Z)-octadecenoate + H(+). It carries out the reaction 1-(9Z-octadecenoyl)-2-O-(5Z,8Z,11Z,14Z-eicosatetraenyl)-sn-glycerol + H2O = 2-O-(5Z,8Z,11Z,14Z)-eicosatetraenylglycerol + (9Z)-octadecenoate + H(+). Its activity is regulated as follows. Inhibited by 1,2,3-triazole urea covalent inhibitor KT172, DH376 and DO34. Inhibited by p-hydroxy-mercuri-benzoate and HgCl(2), but not to PMSF. Also inhibited by RHC80267. Diacylglycerol lipase activity is inhibited by the phosphorylation of Ser-784 and Ser-810 by CAMK2A. Serine hydrolase that hydrolyzes arachidonic acid-esterified diacylglycerols (DAGs) to produce the principal endocannabinoid (eCB), 2-arachidonoylglycerol (2-AG). Preferentially hydrolyzes sn-1 fatty acids from diacylglycerols (DAG) that contain arachidonic acid (AA) esterified at the sn-2 position to biosynthesize 2-AG. Has negligible activity against other lipids including monoacylglycerols and phospholipids. Plays a key role in regulating 2-AG signaling in the central nervous system (CNS). Controls the activity of 2-AG as a retrograde messenger at neuronal synapses. Supports axonal growth during development and adult neurogenesis. Plays a role for eCB signaling in the physiological regulation of anxiety and depressive behaviors. Also regulates neuroinflammatory responses in the brain, in particular, LPS-induced microglial activation. The sequence is that of Diacylglycerol lipase-alpha (Dagla) from Mus musculus (Mouse).